We begin with the raw amino-acid sequence, 172 residues long: Arginine repressor (172 aa).

Belongs to the ArgR family.

It is found in the cytoplasm. It functions in the pathway amino-acid biosynthesis; L-arginine biosynthesis [regulation]. In terms of biological role, regulates arginine biosynthesis genes. The sequence is that of Arginine repressor from Bifidobacterium adolescentis (strain ATCC 15703 / DSM 20083 / NCTC 11814 / E194a).